Consider the following 860-residue polypeptide: Leucine--tRNA ligase (860 aa).

A 'HIGH' region motif is present at residues 42-52 (PYPSGRLHMGH). Positions 619–623 (KMSKS) match the 'KMSKS' region motif. K622 lines the ATP pocket.

It belongs to the class-I aminoacyl-tRNA synthetase family.

It localises to the cytoplasm. It carries out the reaction tRNA(Leu) + L-leucine + ATP = L-leucyl-tRNA(Leu) + AMP + diphosphate. The chain is Leucine--tRNA ligase from Klebsiella pneumoniae subsp. pneumoniae (strain ATCC 700721 / MGH 78578).